Consider the following 398-residue polypeptide: Nuclear egress protein 2 (398 aa).

The Perinuclear space segment spans residues 1–359 (MEMNKVLHQD…GPSRPQSGPW (359 aa)). 2 disordered regions span residues 202 to 246 (ALTR…PPPP) and 306 to 334 (LEEH…SLER). Residues 215–224 (ASPPPPPPRH) show a composition bias toward pro residues. A Phosphoserine modification is found at serine 216. The segment covering 225–240 (PSCSPTMVAAGGAAAG) has biased composition (low complexity). Residues 311 to 323 (SRRRGVSTHHRHP) are compositionally biased toward basic residues. Residues 360-382 (LPARFATLGPLVLALLLVLALLW) traverse the membrane as a helical segment. The Nuclear portion of the chain corresponds to 383–398 (RGHGQSSSPTRSAHRD).

Belongs to the herpesviridae NEC2 protein family. As to quaternary structure, forms a heterohexameric complex with NEC1. Interacts with host UBA7 and RNF170; this interaction promotes UBA7 proteasomal degradation. In terms of processing, phosphorylated. Phosphorylation by viral kinase UL97 at Ser-216 plays an important role for correct viral nuclear egress complex (NEC) localization.

The protein localises to the host nucleus inner membrane. In terms of biological role, plays an essential role in virion nuclear egress, the first step of virion release from infected cell. Within the host nucleus, NEC1 interacts with the newly formed capsid through the vertexes and directs it to the inner nuclear membrane by associating with NEC2. Induces the budding of the capsid at the inner nuclear membrane as well as its envelopment into the perinuclear space. There, the NEC1/NEC2 complex promotes the fusion of the enveloped capsid with the outer nuclear membrane and the subsequent release of the viral capsid into the cytoplasm where it will reach the secondary budding sites in the host Golgi or trans-Golgi network. Inhibits host ISGylation and subsequent innate antiviral response by targeting host UBA7 for proteasomal degradation. In Homo sapiens (Human), this protein is Nuclear egress protein 2.